Reading from the N-terminus, the 287-residue chain is Ribosomal RNA small subunit methyltransferase A (287 aa).

Residues N28, L30, G55, E77, D103, and N123 each coordinate S-adenosyl-L-methionine.

It belongs to the class I-like SAM-binding methyltransferase superfamily. rRNA adenine N(6)-methyltransferase family. RsmA subfamily.

The protein resides in the cytoplasm. It catalyses the reaction adenosine(1518)/adenosine(1519) in 16S rRNA + 4 S-adenosyl-L-methionine = N(6)-dimethyladenosine(1518)/N(6)-dimethyladenosine(1519) in 16S rRNA + 4 S-adenosyl-L-homocysteine + 4 H(+). In terms of biological role, specifically dimethylates two adjacent adenosines (A1518 and A1519) in the loop of a conserved hairpin near the 3'-end of 16S rRNA in the 30S particle. May play a critical role in biogenesis of 30S subunits. The chain is Ribosomal RNA small subunit methyltransferase A from Rhodopseudomonas palustris (strain BisB5).